A 194-amino-acid chain; its full sequence is Peptidyl-tRNA hydrolase (194 aa).

Tyr-17 provides a ligand contact to tRNA. The active-site Proton acceptor is His-22. The tRNA site is built by Tyr-68, Asn-70, and Asn-116.

The protein belongs to the PTH family. In terms of assembly, monomer.

It localises to the cytoplasm. It catalyses the reaction an N-acyl-L-alpha-aminoacyl-tRNA + H2O = an N-acyl-L-amino acid + a tRNA + H(+). In terms of biological role, hydrolyzes ribosome-free peptidyl-tRNAs (with 1 or more amino acids incorporated), which drop off the ribosome during protein synthesis, or as a result of ribosome stalling. Catalyzes the release of premature peptidyl moieties from peptidyl-tRNA molecules trapped in stalled 50S ribosomal subunits, and thus maintains levels of free tRNAs and 50S ribosomes. The polypeptide is Peptidyl-tRNA hydrolase (Pseudoalteromonas translucida (strain TAC 125)).